Reading from the N-terminus, the 58-residue chain is ATP synthase F(0) complex subunit k, mitochondrial (58 aa).

N6-acetyllysine is present on residues lysine 16 and lysine 17. Residues 23–45 (TLTGRMNCVLATYGGIALLVLYF) form a helical membrane-spanning segment.

As to quaternary structure, component of the ATP synthase complex composed at least of ATP5F1A/subunit alpha, ATP5F1B/subunit beta, ATP5MC1/subunit c (homooctomer), MT-ATP6/subunit a, MT-ATP8/subunit 8, ATP5ME/subunit e, ATP5MF/subunit f, ATP5MG/subunit g, ATP5MK/subunit k, ATP5MJ/subunit j, ATP5F1C/subunit gamma, ATP5F1D/subunit delta, ATP5F1E/subunit epsilon, ATP5PF/subunit F6, ATP5PB/subunit b, ATP5PD/subunit d, ATP5PO/subunit OSCP. ATP synthase complex consists of a soluble F(1) head domain (subunits alpha(3) and beta(3)) - the catalytic core - and a membrane F(0) domain - the membrane proton channel (subunits c, a, 8, e, f, g, k and j). These two domains are linked by a central stalk (subunits gamma, delta, and epsilon) rotating inside the F1 region and a stationary peripheral stalk (subunits F6, b, d, and OSCP). The ATP synthase complex/complex V exists as a monomeric and a dimeric supercomplex that helps shape mitochondrial cristae to optimize proton flow.

It localises to the mitochondrion membrane. Functionally, subunit k, of the mitochondrial membrane ATP synthase complex (F(1)F(0) ATP synthase or Complex V) that produces ATP from ADP in the presence of a proton gradient across the membrane which is generated by electron transport complexes of the respiratory chain. ATP synthase complex consist of a soluble F(1) head domain - the catalytic core - and a membrane F(1) domain - the membrane proton channel. These two domains are linked by a central stalk rotating inside the F(1) region and a stationary peripheral stalk. During catalysis, ATP synthesis in the catalytic domain of F(1) is coupled via a rotary mechanism of the central stalk subunits to proton translocation. In vivo, can only synthesize ATP although its ATP hydrolase activity can be activated artificially in vitro. Part of the complex F(0) domain. Required for dimerization of the ATP synthase complex and as such regulates ATP synthesis in the mitochondria. The protein is ATP synthase F(0) complex subunit k, mitochondrial of Mus musculus (Mouse).